The chain runs to 313 residues: MISDSKLLASAAWDAQSLNELKAKAGEDPAANIRPVARQVEGMFVQMMLKSMRDALPKDGLFSSEHTRLYTSMYDQQIAQQMTAGKGLGLAEMMVKQMTPEQPLPEESTPAAPMKFPLETVVRYQNQALSQLVQKAVPRNYDDSLPGDSKAFLAQLSLPAQLASQQSGVPHHLILAQAALESGWGQRQIRRENGEPSYNLFGVKASGNWKGPVTEITTTEYENGEAKKVKAKFRVYSSYLEALSDYVGLLTRNPRYAAVTTAASAEQGAQALQDAGYATDPHYARKLTNMIQQMKSISDKVSKTYSMNIDNLF.

Residues 148 to 313 (DSKAFLAQLS…TYSMNIDNLF (166 aa)) form a catalytic region. Residues glutamate 220 and aspartate 245 contribute to the active site.

The protein in the N-terminal section; belongs to the FlgJ family. It in the C-terminal section; belongs to the glycosyl hydrolase 73 family.

It localises to the periplasm. Its function is as follows. Flagellum-specific muramidase which hydrolyzes the peptidoglycan layer to assemble the rod structure in the periplasmic space. This is Peptidoglycan hydrolase FlgJ (flgJ) from Escherichia coli (strain K12).